The sequence spans 118 residues: Large ribosomal subunit protein uL24 (118 aa).

It belongs to the universal ribosomal protein uL24 family. In terms of assembly, part of the 50S ribosomal subunit.

Its function is as follows. One of two assembly initiator proteins, it binds directly to the 5'-end of the 23S rRNA, where it nucleates assembly of the 50S subunit. One of the proteins that surrounds the polypeptide exit tunnel on the outside of the subunit. In Synechococcus sp. (strain CC9605), this protein is Large ribosomal subunit protein uL24.